The following is a 434-amino-acid chain: Phosphomethylpyrimidine synthase 2 (434 aa).

Residues M94, Y123, H162, 184-186 (SRG), 225-228 (NAMR), and E264 contribute to the substrate site. Residue H268 participates in Zn(2+) binding. A substrate-binding site is contributed by Y291. Residue H332 coordinates Zn(2+). 3 residues coordinate [4Fe-4S] cluster: C408, C411, and C415.

It belongs to the ThiC family. [4Fe-4S] cluster is required as a cofactor.

The enzyme catalyses 5-amino-1-(5-phospho-beta-D-ribosyl)imidazole + S-adenosyl-L-methionine = 4-amino-2-methyl-5-(phosphooxymethyl)pyrimidine + CO + 5'-deoxyadenosine + formate + L-methionine + 3 H(+). The protein operates within cofactor biosynthesis; thiamine diphosphate biosynthesis. In terms of biological role, catalyzes the synthesis of the hydroxymethylpyrimidine phosphate (HMP-P) moiety of thiamine from aminoimidazole ribotide (AIR) in a radical S-adenosyl-L-methionine (SAM)-dependent reaction. This chain is Phosphomethylpyrimidine synthase 2, found in Methanosphaera stadtmanae (strain ATCC 43021 / DSM 3091 / JCM 11832 / MCB-3).